The primary structure comprises 419 residues: Light-independent protochlorophyllide reductase subunit N (419 aa).

[4Fe-4S] cluster is bound by residues Cys17, Cys42, and Cys103.

Belongs to the BchN/ChlN family. As to quaternary structure, protochlorophyllide reductase is composed of three subunits; ChlL, ChlN and ChlB. Forms a heterotetramer of two ChlB and two ChlN subunits. [4Fe-4S] cluster is required as a cofactor.

The enzyme catalyses chlorophyllide a + oxidized 2[4Fe-4S]-[ferredoxin] + 2 ADP + 2 phosphate = protochlorophyllide a + reduced 2[4Fe-4S]-[ferredoxin] + 2 ATP + 2 H2O. The protein operates within porphyrin-containing compound metabolism; chlorophyll biosynthesis (light-independent). Component of the dark-operative protochlorophyllide reductase (DPOR) that uses Mg-ATP and reduced ferredoxin to reduce ring D of protochlorophyllide (Pchlide) to form chlorophyllide a (Chlide). This reaction is light-independent. The NB-protein (ChlN-ChlB) is the catalytic component of the complex. The polypeptide is Light-independent protochlorophyllide reductase subunit N (Prochlorococcus marinus (strain NATL1A)).